The sequence spans 500 residues: NAD(P)H-quinone oxidoreductase chain 4, chloroplastic (500 aa).

The next 15 membrane-spanning stretches (helical) occupy residues Phe4–Phe24, Ile37–Leu57, Ile87–Val107, Leu113–Ser130, Leu134–Met154, Phe167–Leu187, Ile207–Ile227, His242–Val262, Ala272–Ala292, Ile305–Asp325, Gly330–Gly350, Met364–Ala384, Leu386–Thr406, Val417–Leu437, and Phe463–Phe483.

The protein belongs to the complex I subunit 4 family.

Its subcellular location is the plastid. The protein localises to the chloroplast thylakoid membrane. It catalyses the reaction a plastoquinone + NADH + (n+1) H(+)(in) = a plastoquinol + NAD(+) + n H(+)(out). The catalysed reaction is a plastoquinone + NADPH + (n+1) H(+)(in) = a plastoquinol + NADP(+) + n H(+)(out). This Cucumis sativus (Cucumber) protein is NAD(P)H-quinone oxidoreductase chain 4, chloroplastic.